A 1194-amino-acid polypeptide reads, in one-letter code: Cohesin subunit SA-2 (1194 aa).

Residues 224–309 (FVHRYRDAIA…SRFKDRIVSM (86 aa)) enclose the SCD domain. Positions 986–1027 (DTMSVMSGMSGRGSSTRSKKIKPPTGKRKLPEAEESSSSDSM) are disordered. Residues 988-1001 (MSVMSGMSGRGSST) are compositionally biased toward low complexity. Over residues 1002–1013 (RSKKIKPPTGKR) the composition is skewed to basic residues.

The protein belongs to the SCC3 family. Part of the cohesin complex which is composed of a heterodimer between a SMC1 protein (SMC1A or SMC1B) and SMC3, which are attached via their hinge domain, and RAD21 which link them at their heads, and one STAG protein (STAG1, STAG2 or STAG3). In cohesin complexes, STAG2 is mutually exclusive with STAG1 and STAG3. Interacts directly with RAD21 in cohesin complex. Post-translationally, phosphorylated by PLK1. The large dissociation of cohesin from chromosome arms during prophase is partly due to its phosphorylation.

The protein resides in the nucleus. The protein localises to the chromosome. Its subcellular location is the centromere. Functionally, component of cohesin complex, a complex required for the cohesion of sister chromatids after DNA replication. The cohesin complex apparently forms a large proteinaceous ring within which sister chromatids can be trapped. At anaphase, the complex is cleaved and dissociates from chromatin, allowing sister chromatids to segregate. The cohesin complex may also play a role in spindle pole assembly during mitosis. The polypeptide is Cohesin subunit SA-2 (stag2) (Xenopus laevis (African clawed frog)).